A 300-amino-acid polypeptide reads, in one-letter code: 4-hydroxy-tetrahydrodipicolinate synthase (300 aa).

Thr-45 contributes to the pyruvate binding site. Catalysis depends on Tyr-140, which acts as the Proton donor/acceptor. The active-site Schiff-base intermediate with substrate is Lys-169. Ile-210 contributes to the pyruvate binding site.

This sequence belongs to the DapA family. In terms of assembly, homotetramer; dimer of dimers.

It is found in the cytoplasm. It catalyses the reaction L-aspartate 4-semialdehyde + pyruvate = (2S,4S)-4-hydroxy-2,3,4,5-tetrahydrodipicolinate + H2O + H(+). It participates in amino-acid biosynthesis; L-lysine biosynthesis via DAP pathway; (S)-tetrahydrodipicolinate from L-aspartate: step 3/4. In terms of biological role, catalyzes the condensation of (S)-aspartate-beta-semialdehyde [(S)-ASA] and pyruvate to 4-hydroxy-tetrahydrodipicolinate (HTPA). The protein is 4-hydroxy-tetrahydrodipicolinate synthase of Helicobacter pylori (strain P12).